Reading from the N-terminus, the 434-residue chain is Glutamyl-tRNA reductase (434 aa).

Residues 49-52, Ser-107, 112-114, and Gln-118 each bind substrate; these read TCNR and EPQ. The active-site Nucleophile is Cys-50. 187–192 is a binding site for NADP(+); it reads GAGETV.

The protein belongs to the glutamyl-tRNA reductase family. In terms of assembly, homodimer.

The catalysed reaction is (S)-4-amino-5-oxopentanoate + tRNA(Glu) + NADP(+) = L-glutamyl-tRNA(Glu) + NADPH + H(+). The protein operates within porphyrin-containing compound metabolism; protoporphyrin-IX biosynthesis; 5-aminolevulinate from L-glutamyl-tRNA(Glu): step 1/2. In terms of biological role, catalyzes the NADPH-dependent reduction of glutamyl-tRNA(Glu) to glutamate 1-semialdehyde (GSA). In Hydrogenovibrio crunogenus (strain DSM 25203 / XCL-2) (Thiomicrospira crunogena), this protein is Glutamyl-tRNA reductase.